We begin with the raw amino-acid sequence, 110 residues long: Thioredoxin (110 aa).

The Thioredoxin domain occupies 2–110; that stretch reads SALLVEIDKD…IDAMIAKHVG (109 aa). An intrachain disulfide couples Cys-33 to Cys-36.

This sequence belongs to the thioredoxin family.

In terms of biological role, participates in various redox reactions through the reversible oxidation of its active center dithiol to a disulfide and catalyzes dithiol-disulfide exchange reactions. In Peptoclostridium acidaminophilum (Eubacterium acidaminophilum), this protein is Thioredoxin (trxA).